The chain runs to 84 residues: Acid stress protein IbaG (84 aa).

Belongs to the BolA/IbaG family.

Involved in cell resistance against acid stress. This chain is Acid stress protein IbaG, found in Escherichia coli O6:H1 (strain CFT073 / ATCC 700928 / UPEC).